Here is a 570-residue protein sequence, read N- to C-terminus: Hydroxylamine reductase (570 aa).

Positions 5, 8, 17, and 23 each coordinate [4Fe-4S] cluster. His266, Glu290, Cys334, Cys425, Cys453, Cys478, Glu513, and Lys515 together coordinate hybrid [4Fe-2O-2S] cluster. Cys425 is subject to Cysteine persulfide.

Belongs to the HCP family. The cofactor is [4Fe-4S] cluster. It depends on hybrid [4Fe-2O-2S] cluster as a cofactor.

The protein resides in the cytoplasm. The catalysed reaction is A + NH4(+) + H2O = hydroxylamine + AH2 + H(+). In terms of biological role, catalyzes the reduction of hydroxylamine to form NH(3) and H(2)O. The protein is Hydroxylamine reductase of Clostridium botulinum (strain 657 / Type Ba4).